The primary structure comprises 551 residues: Rhodopsin kinase grk7-a (551 aa).

S36 is subject to Phosphoserine. The 118-residue stretch at 57–174 (YQSICVEQPI…QNSPFYDRFL (118 aa)) folds into the RGS domain. One can recognise a Protein kinase domain in the interval 189 to 451 (FYEFRILGKG…DDDPRKHAFF (263 aa)). Residues 195–203 (LGKGGFGEV) and K218 each bind ATP. Catalysis depends on D314, which acts as the Proton acceptor. One can recognise an AGC-kinase C-terminal domain in the interval 452-517 (KSINFQRLEA…GAIPISWQKE (66 aa)). Position 487 is a phosphoserine (S487). Residues 529–551 (DPSREATGGGGNSGEKSGVCSIL) form a disordered region. A compositionally biased stretch (low complexity) spans 542–551 (GEKSGVCSIL). C548 carries the cysteine methyl ester modification. C548 carries S-geranylgeranyl cysteine lipidation. The propeptide at 549-551 (SIL) is removed in mature form.

The protein belongs to the protein kinase superfamily. AGC Ser/Thr protein kinase family. GPRK subfamily. In terms of processing, autophosphorylated in vitro at Ser-487. Phosphorylation at Ser-36 is regulated by light and activated by cAMP.

It is found in the membrane. The catalysed reaction is L-threonyl-[rhodopsin] + ATP = O-phospho-L-threonyl-[rhodopsin] + ADP + H(+). The enzyme catalyses L-seryl-[rhodopsin] + ATP = O-phospho-L-seryl-[rhodopsin] + ADP + H(+). Functionally, retina-specific kinase involved in the shutoff of the photoresponse and adaptation to changing light conditions via cone opsin phosphorylation, including rhodopsin (RHO). The chain is Rhodopsin kinase grk7-a (grk7-a) from Xenopus laevis (African clawed frog).